The primary structure comprises 428 residues: Spliceosome RNA helicase Ddx39b (428 aa).

The span at 1-19 (MAENDVDNELLDYEDDEVE) shows a compositional bias: acidic residues. The disordered stretch occupies residues 1-31 (MAENDVDNELLDYEDDEVETAAGADGTEAPA). N-acetylalanine is present on Ala-2. An N6-acetyllysine; alternate modification is found at Lys-36. Lys-36 participates in a covalent cross-link: Glycyl lysine isopeptide (Lys-Gly) (interchain with G-Cter in SUMO2); alternate. Phosphoserine is present on residues Ser-38 and Ser-41. The Q motif signature appears at 45–73 (SGFRDFLLKPELLRAIVDCGFEHPSEVQH). Residues 76 to 249 (IPQAILGMDV…RKFMQDPMEI (174 aa)) enclose the Helicase ATP-binding domain. 89 to 96 (AKSGMGKT) lines the ATP pocket. Thr-172 is modified (phosphothreonine). The short motif at 196–199 (DECD) is the DECD box element. The 162-residue stretch at 261–422 (GLQQYYVKLK…ELPDEIDISS (162 aa)) folds into the Helicase C-terminal domain.

This sequence belongs to the DEAD box helicase family. DECD subfamily. Homodimer, and heterodimer with DDX39A. DDX39B interacts with the THO subcomplex to form the THO-DDX39B complex which multimerizes into a 28-subunit tetrameric assembly. Component of the transcription/export (TREX) complex at least composed of ALYREF/THOC4, DDX39B, SARNP/CIP29, CHTOP and the THO subcomplex; in the complex interacts with THOC2. THOC1-THOC2-THOC3-DDX39B subcomplex is sufficient for the interaction with export factor NXF1-NXT1. TREX seems to have a dynamic structure involving ATP-dependent remodeling. Within the TREX complex bridges ALYREF/THOC4 and the THO subcomplex, and, in a ATP-dependent manner, ALYREF/THOC4 and SARNP/CIP29. Component of the spliceosome. Interacts directly with U2AF2. Interacts with RBM8A, RNPS1 and SRRM1, FYTTD1/UIF, THOC1, MX1 and POLDIP3. Interacts with LUZP4. Interacts with SARNP/CIP29 (via the C-terminal domain); the interaction is direct and facilitates RNA binding of DDX39B.

Its subcellular location is the nucleus. It localises to the nucleus speckle. The protein localises to the cytoplasm. The catalysed reaction is ATP + H2O = ADP + phosphate + H(+). Its function is as follows. Involved in nuclear export of spliced and unspliced mRNA. Component of the TREX complex which is thought to couple mRNA transcription, processing and nuclear export, and specifically associates with spliced mRNA and not with unspliced pre-mRNA. The TREX complex is recruited to spliced mRNAs by a transcription-independent mechanism, binds to mRNA upstream of the exon-junction complex (EJC) and is recruited in a splicing- and cap-dependent manner to a region near the 5' end of the mRNA where it functions in mRNA export to the cytoplasm via the TAP/NXF1 pathway. The THOC1-THOC2-THOC3 core complex alone is sufficient to promote ATPase activity of DDX39B; in the complex THOC2 is the only component that directly interacts with DDX39B. Associates with SARNP/CIP29, which facilitates RNA binding of DDX39B and likely plays a role in mRNA export. May undergo several rounds of ATP hydrolysis during assembly of TREX to drive subsequent loading of components such as ALYREF/THOC4 and CHTOP onto mRNA. Also associates with pre-mRNA independent of ALYREF/THOC4. Involved in the nuclear export of intronless mRNA; the ATP-bound form is proposed to recruit export adapter ALYREF/THOC4 to intronless mRNA; its ATPase activity is cooperatively stimulated by RNA and ALYREF/THOC4 and ATP hydrolysis is thought to trigger the dissociation from RNA to allow the association of ALYREF/THOC4 and the NXF1-NXT1 heterodimer. Involved in transcription elongation and genome stability. Functionally, splice factor that is required for the first ATP-dependent step in spliceosome assembly and for the interaction of U2 snRNP with the branchpoint. Has both RNA-stimulated ATP binding/hydrolysis activity and ATP-dependent RNA unwinding activity. Even with the stimulation of RNA, the ATPase activity is weak. Can only hydrolyze ATP but not other NTPs. The RNA stimulation of ATPase activity does not have a strong preference for the sequence and length of the RNA. However, ssRNA stimulates the ATPase activity much more strongly than dsRNA. Can unwind 5' or 3' overhangs or blunt end RNA duplexes in vitro. The ATPase and helicase activities are not influenced by U2AF2; the effect of ALYREF/THOC4 is reported conflictingly. This Mus musculus (Mouse) protein is Spliceosome RNA helicase Ddx39b (Ddx39b).